A 21-amino-acid polypeptide reads, in one-letter code: Major outer membrane protein (21 aa).

In terms of assembly, disulfide bond interactions within and between MOMP molecules and other components form high molecular-weight oligomers.

The protein localises to the cell outer membrane. Functionally, structural rigidity of the outer membrane of elementary bodies and porin forming, permitting diffusion of solutes through the intracellular reticulate body membrane. In Actinobacillus equuli, this protein is Major outer membrane protein.